Reading from the N-terminus, the 659-residue chain is Putative pentatricopeptide repeat-containing protein At3g16890, mitochondrial (659 aa).

The N-terminal 32 residues, 1-32 (MRGFASSASRIATAAAASKSLNASTSVNPKLS), are a transit peptide targeting the mitochondrion. PPR repeat units follow at residues 109–143 (DQSL…GYRI), 144–178 (SDEL…GMKP), 179–213 (STRL…GCKP), 214–248 (DRFT…GNRP), 249–283 (NVFT…KLNP), 284–318 (NEAT…DSNL), 319–353 (QRVG…GYIP), 354–388 (DSST…GVKP), 389–423 (GFNG…GLLS), 424–458 (SVYS…GISP), 459–493 (NLVT…GFKP), 494–528 (DVIT…GIEP), 529–563 (NEIT…GLSP), 564–598 (DLYA…GLKP), and 599–633 (DNFT…GCVP).

Belongs to the PPR family. P subfamily.

Its subcellular location is the mitochondrion. Its function is as follows. Required for the ubiquinol-cytochrome c oxidoreductase activity of mitochondrial complex III. This chain is Putative pentatricopeptide repeat-containing protein At3g16890, mitochondrial (PPR40), found in Arabidopsis thaliana (Mouse-ear cress).